Reading from the N-terminus, the 493-residue chain is 6-aminohexanoate-cyclic-dimer hydrolase (493 aa).

Catalysis depends on charge relay system residues lysine 72 and serine 150. The Acyl-ester intermediate role is filled by serine 174.

This sequence belongs to the amidase family. As to quaternary structure, homodimer.

The catalysed reaction is 1,8-diazacyclotetradecane-2,9-dione + H2O = N-(6-aminohexanoyl)-6-aminohexanoate. It participates in xenobiotic degradation; nylon-6 oligomer degradation. Functionally, catalyzes the hydrolysis of 6-aminohexanoic acid cyclic dimer (1,8-diazacyclotetradecane-2,9-dione) to form the linear dimer 6-aminohexanoyl-6-aminohexanoic acid. The polypeptide is 6-aminohexanoate-cyclic-dimer hydrolase (nylA) (Pseudomonas sp. (strain NK87)).